Reading from the N-terminus, the 181-residue chain is MKYNKEKLKNKVYLAIIGMPHGIRGDVFVKILSADPQRFKSYGTLYDDMGRSYEIVTLRTQKNNAIVRFKGVENRNAAESLKGIHLYVMRDQLIDDLREDEFYQVDLIGLRVQEYGGKILGEVCGFCNFGAGDLLEIRLNTGKRMLIPFSKVAVPEICMDSGFLIVDPMAAGLRDGEENDQ.

The 74-residue stretch at 99-172 folds into the PRC barrel domain; it reads EDEFYQVDLI…FLIVDPMAAG (74 aa).

The protein belongs to the RimM family. In terms of assembly, binds ribosomal protein uS19.

The protein localises to the cytoplasm. An accessory protein needed during the final step in the assembly of 30S ribosomal subunit, possibly for assembly of the head region. Essential for efficient processing of 16S rRNA. May be needed both before and after RbfA during the maturation of 16S rRNA. It has affinity for free ribosomal 30S subunits but not for 70S ribosomes. The protein is Ribosome maturation factor RimM of Bartonella tribocorum (strain CIP 105476 / IBS 506).